Reading from the N-terminus, the 475-residue chain is Ribulose bisphosphate carboxylase large chain (475 aa).

A propeptide spanning residues 1–2 (MV) is cleaved from the precursor. Position 3 is an N-acetylproline (P3). At K14 the chain carries N6,N6,N6-trimethyllysine. Substrate-binding residues include N123 and T173. Catalysis depends on K175, which acts as the Proton acceptor. Residue K177 coordinates substrate. Mg(2+) contacts are provided by K201, D203, and E204. K201 carries the post-translational modification N6-carboxylysine. The active-site Proton acceptor is H294. Substrate-binding residues include R295, H327, and S379.

Belongs to the RuBisCO large chain family. Type I subfamily. In terms of assembly, heterohexadecamer of 8 large chains and 8 small chains; disulfide-linked. The disulfide link is formed within the large subunit homodimers. Requires Mg(2+) as cofactor. Post-translationally, the disulfide bond which can form in the large chain dimeric partners within the hexadecamer appears to be associated with oxidative stress and protein turnover.

The protein localises to the plastid. It localises to the chloroplast. The enzyme catalyses 2 (2R)-3-phosphoglycerate + 2 H(+) = D-ribulose 1,5-bisphosphate + CO2 + H2O. It catalyses the reaction D-ribulose 1,5-bisphosphate + O2 = 2-phosphoglycolate + (2R)-3-phosphoglycerate + 2 H(+). Its function is as follows. RuBisCO catalyzes two reactions: the carboxylation of D-ribulose 1,5-bisphosphate, the primary event in carbon dioxide fixation, as well as the oxidative fragmentation of the pentose substrate in the photorespiration process. Both reactions occur simultaneously and in competition at the same active site. In Tetradesmus obliquus (Green alga), this protein is Ribulose bisphosphate carboxylase large chain.